The following is a 1068-amino-acid chain: MFTLSQTSRAWFIDRARQAREERLVQKERERAAVVIQAHVRSFLCRSRLQRDIRREIDDFFKADDPESTKRSALCIFKIARKLLFLFRIKEDNERFEKLCRSILSSMDAENEPKVWYVSLACSKDLTLLWIQQIKNILWYCCDFLKQLKPEILQDSRLITLYLTMLVTFTDTSTWKILRGKGESLRPAMNHICANIMGHLNQHGFYSVLQILLTRGLARPRPCLSKGTLTAAFSLALRPVIAAQFSDNLIRPFLIHIMSVPALVTHLSTVTPERLTVLESHDMLRKFIIFLRDQDRCRDVCESLEGCHTLCLMGNLLHLGSLSPRVLEEETDGFVSLLTQTLCYCRKYVSQKKSNLTHWHPVLGWFSQSVDYGLNESMHLITKQLQFLWGVPLIRIFFCDILSKKLLESQEPAHAQPASPQNVLPVKSLLKRAFQKSASVRNILRPVGGKRVDSAEVQKVCNICVLYQTSLTTLTQIRLQILTGLTYLDDLLPKLWAFICELGPHGGLKLFLECLNNDTEESKQLLAMLMLFCDCSRHLITILDDIEVYEEQISFKLEELVTISSFLNSFVFKMIWDGIVENAKGETLELFQSVHGWLMVLYERDCRRRFTPEDHWLRKDLKPSVLFQELDRDRKRAQLILQYIPHVIPHKNRVLLFRTMVTKEKEKLGLVETSSASPHVTHITIRRSRMLEDGYEQLRQLSQHAMKGVIRVKFVNDLGVDEAGIDQDGVFKEFLEEIIKRVFDPALNLFKTTSGDERLYPSPTSYIHENYLQLFEFVGKMLGKAVYEGIVVDVPFASFFLSQLLGHHHSVFYSSVDELPSLDSEFYKNLTSIKRYDGDITDLGLTLSYDEDVMGQLVCHELIPGGKTIPVTNENKISYIHLMAHFRMHTQIKNQTAALISGFRSIIKPEWIRMFSTPELQRLISGDNAEIDLEDLKKHTVYYGGFHGSHRVIIWLWDILASDFTPDERAMFLKFVTSCSRPPLLGFAYLKPPFSIRCVEVSDDQDTGDTLGSVLRGFFTIRKREPGGRLPTSSTCFNLLKLPNYSKKSVLREKLRYAISMNTGFELS.

M1 carries the post-translational modification N-acetylmethionine. An IQ domain is found at 29–58 (RERAAVVIQAHVRSFLCRSRLQRDIRREID). At S419 the chain carries Phosphoserine. The region spanning 702-1068 (SQHAMKGVIR…ISMNTGFELS (367 aa)) is the HECT domain. C1036 serves as the catalytic Glycyl thioester intermediate.

In terms of tissue distribution, widely expressed.

It localises to the postsynaptic density. The catalysed reaction is S-ubiquitinyl-[E2 ubiquitin-conjugating enzyme]-L-cysteine + [acceptor protein]-L-lysine = [E2 ubiquitin-conjugating enzyme]-L-cysteine + N(6)-ubiquitinyl-[acceptor protein]-L-lysine.. It participates in protein modification; protein ubiquitination. Its function is as follows. E3 ubiquitin-protein ligase which accepts ubiquitin from an E2 ubiquitin-conjugating enzyme in the form of a thioester and then directly transfers the ubiquitin to targeted substrates. Ubiquitinates BCKDK and targets it for degradation, thereby regulating various metabolic processes. Involved in the positive regulation of neurite branching in hippocampal neurons and the control of neuronal spine number and morphology, through the ubiquitination of PPP3CC. The polypeptide is Ubiquitin-protein ligase E3B (UBE3B) (Homo sapiens (Human)).